The primary structure comprises 326 residues: Transmembrane protein PVRIG (326 aa).

Helical transmembrane passes span 26–46, 62–78, and 172–192; these read LVLPWVLLTLCVTAGTPEVWV, CGFLGSGSISLVTVSWG, and LAGILGVSGVLLFGCVYLLHL. Tyrosine 233 is subject to Phosphotyrosine. The segment at 296–326 is disordered; that stretch reads AGERPPHTGPGLTLFPDPRGPRAMEGPLGVR.

Interacts with NECTIN2, hence competing with CD226. As to expression, expressed in some types of immune cells. Expressed at low levels on the surface of freshly isolated T-cells and natural killer (NK) cells, predominantly on CD8+ T-cells (mainly memory/effector, but not naive cells) and on both CD16+ and CD16- NK cells. T-cell expression levels are variable among individuals. Not detected in B-cells, naive or helper T-cells, monocytes, nor neutrophils (at protein level). Not detected in dendritic cells.

It localises to the cell membrane. Functionally, cell surface receptor for NECTIN2. May act as a coinhibitory receptor that suppresses T-cell receptor-mediated signals. Following interaction with NECTIN2, inhibits T-cell proliferation. Competes with CD226 for NECTIN2-binding. The polypeptide is Transmembrane protein PVRIG (PVRIG) (Homo sapiens (Human)).